A 256-amino-acid polypeptide reads, in one-letter code: Imidazole glycerol phosphate synthase subunit HisF (256 aa).

Residues D12 and D131 contribute to the active site.

Belongs to the HisA/HisF family. Heterodimer of HisH and HisF.

Its subcellular location is the cytoplasm. It carries out the reaction 5-[(5-phospho-1-deoxy-D-ribulos-1-ylimino)methylamino]-1-(5-phospho-beta-D-ribosyl)imidazole-4-carboxamide + L-glutamine = D-erythro-1-(imidazol-4-yl)glycerol 3-phosphate + 5-amino-1-(5-phospho-beta-D-ribosyl)imidazole-4-carboxamide + L-glutamate + H(+). Its pathway is amino-acid biosynthesis; L-histidine biosynthesis; L-histidine from 5-phospho-alpha-D-ribose 1-diphosphate: step 5/9. Its function is as follows. IGPS catalyzes the conversion of PRFAR and glutamine to IGP, AICAR and glutamate. The HisF subunit catalyzes the cyclization activity that produces IGP and AICAR from PRFAR using the ammonia provided by the HisH subunit. The chain is Imidazole glycerol phosphate synthase subunit HisF from Azotobacter vinelandii (strain DJ / ATCC BAA-1303).